The primary structure comprises 987 residues: uncharacterized protein (987 aa).

2 helical membrane-spanning segments follow: residues 12-32 and 958-978; these read FIYL…SVSG and VENN…LGIL.

To M.jannaschii MJ1393 and A.fulgidus AF2028.

It localises to the cell membrane. This is an uncharacterized protein from Methanocaldococcus jannaschii (strain ATCC 43067 / DSM 2661 / JAL-1 / JCM 10045 / NBRC 100440) (Methanococcus jannaschii).